Here is a 337-residue protein sequence, read N- to C-terminus: MAAKNRTIKVAINGFGRIGRLVFRSLLSKANVEVVAINDLTQPEVLAHLLKYDSAHGELKRKITVKQNILQIDRKKVYVFSEKDPQNLPWDEHDIDVVIESTGRFVSEEGASLHLKAGAKRVIISAPAKEKTIRTVVYNVNHKTISSDDKIISAASCTTNCLAPLVHVLEKNFGIVYGTMLTVHAYTADQRLQDAPHNDLRRARAAAVNIVPTTTGAAKAIGLVVPEANGKLNGMSLRVPVLTGSIVELSVVLEKSPSVEQVNQAMKRFASASFKYCEDPIVSSDVVSSEYGSIFDSKLTNIVEVDGMKLYKVYAWYDNESSYVHQLVRVVSYCAKL.

NAD(+) is bound by residues 17-18 (RI), aspartate 39, lysine 83, and serine 125. Residues 156–158 (SCT), threonine 187, arginine 202, 215–216 (TG), and arginine 238 contribute to the D-glyceraldehyde 3-phosphate site. The Nucleophile role is filled by cysteine 157. Asparagine 319 is a binding site for NAD(+).

Belongs to the glyceraldehyde-3-phosphate dehydrogenase family. Homotetramer.

The protein localises to the cytoplasm. The enzyme catalyses D-glyceraldehyde 3-phosphate + phosphate + NAD(+) = (2R)-3-phospho-glyceroyl phosphate + NADH + H(+). Its pathway is carbohydrate degradation; glycolysis; pyruvate from D-glyceraldehyde 3-phosphate: step 1/5. Functionally, catalyzes the oxidative phosphorylation of glyceraldehyde 3-phosphate (G3P) to 1,3-bisphosphoglycerate (BPG) using the cofactor NAD. The first reaction step involves the formation of a hemiacetal intermediate between G3P and a cysteine residue, and this hemiacetal intermediate is then oxidized to a thioester, with concomitant reduction of NAD to NADH. The reduced NADH is then exchanged with the second NAD, and the thioester is attacked by a nucleophilic inorganic phosphate to produce BPG. This is Glyceraldehyde-3-phosphate dehydrogenase (gapA) from Mycoplasma genitalium (strain ATCC 33530 / DSM 19775 / NCTC 10195 / G37) (Mycoplasmoides genitalium).